The sequence spans 534 residues: EH domain-containing protein 1 (534 aa).

M1 is subject to N-acetylmethionine. Positions 55–286 constitute a Dynamin-type G domain; that stretch reads FDNKPMVLLV…DLFKDIQSLP (232 aa). The segment at 65–72 is G1 motif; it reads GQYSTGKT. 65–72 serves as a coordination point for ATP; that stretch reads GQYSTGKT. Positions 91-92 are G2 motif; the sequence is EP. Residues 153-156 are G3 motif; the sequence is DTPG. The stretch at 198–227 forms a coiled coil; the sequence is DEFSEVIKALKNHEDKIRVVLNKADQIETQ. The interval 219-222 is G4 motif; it reads NKAD. K220 is a binding site for ATP. Position 243 (I243) is a region of interest, G5 motif. W258 serves as a coordination point for ATP. 2 positions are modified to phosphoserine: S355 and S456. Positions 444–532 constitute an EH domain; the sequence is DKPTYDEIFY…PHLVPPSKRR (89 aa). An EF-hand domain is found at 476–511; sequence LPNTVLGKIWKLADVDKDGLLDDEEFALANHLIKVK. Positions 489, 491, 493, and 500 each coordinate Ca(2+).

Belongs to the TRAFAC class dynamin-like GTPase superfamily. Dynamin/Fzo/YdjA family. EHD subfamily. In terms of assembly, homooligomer, and heterooligomer with EHD2, EHD3 and EHD4, ATP-binding is required for heterooligomerization. Interacts (via EH domain) with MICALL1 (via NPF1 motif); the interaction is direct and recruits EHD1 to membranes. Interacts with RAB35; the interaction is indirect through MICALL1 and recruits EHD1 to membranes. Interacts (via EH domain) with PACSIN2 (via NPF motifs); regulates localization to tubular recycling endosome membranes. Interacts with PACSIN1. Interacts with RAB8A. Interacts with FER1L5 (via second C2 domain). Interacts with MYOF. Interacts with ZFYVE20. Interacts (via EH domain) with RAB11FIP2.

It localises to the recycling endosome membrane. Its subcellular location is the early endosome membrane. The protein resides in the cell membrane. It is found in the cell projection. The protein localises to the cilium membrane. Its function is as follows. ATP- and membrane-binding protein that controls membrane reorganization/tubulation upon ATP hydrolysis. Acts in early endocytic membrane fusion and membrane trafficking of recycling endosomes. Recruited to endosomal membranes upon nerve growth factor stimulation, indirectly regulates neurite outgrowth. Plays a role in myoblast fusion. Involved in the unidirectional retrograde dendritic transport of endocytosed BACE1 and in efficient sorting of BACE1 to axons implicating a function in neuronal APP processing. Plays a role in the formation of the ciliary vesicle (CV), an early step in cilium biogenesis. Proposed to be required for the fusion of distal appendage vesicles (DAVs) to form the CV by recruiting SNARE complex component SNAP29. Is required for recruitment of transition zone proteins CEP290, RPGRIP1L, TMEM67 and B9D2, and of IFT20 following DAV reorganization before Rab8-dependent ciliary membrane extension. Required for the loss of CCP110 form the mother centriole essential for the maturation of the basal body during ciliogenesis. The protein is EH domain-containing protein 1 of Pongo abelii (Sumatran orangutan).